The primary structure comprises 81 residues: Small ribosomal subunit protein bS16 (81 aa).

This sequence belongs to the bacterial ribosomal protein bS16 family.

This is Small ribosomal subunit protein bS16 from Caldicellulosiruptor saccharolyticus (strain ATCC 43494 / DSM 8903 / Tp8T 6331).